A 493-amino-acid chain; its full sequence is MPTRSRSKANQRRRRPRRVVVVAPSMAQPRTQSRRPRRRNKRGGGLNGSHTVDFSMVHGPFNGNATGTVKFGPSSDCQCIKGNLAAYQKYRIVWLKVVYQSEAAATDRGCIAYHVDTSTTKKAADVVLLDTWNIRSNGSATFGREILGDQPWYESNKDQFFFLYRGTGGTDVAGHYRISGRIQLMNASLWGDDAPPSPGPDPGPQPPPPPPPSPTPVGARFWGYEGVPESRMISERNDHDIDVKPLSFITMYKWEDESWTSVKLSASYLQNDQVEATPYFLIPSSKGKFSVYIECEGFQAVKSIGGKSDGCWGGLIAYNRKKDGWQARAYTGTVLSNYRSTTTVINGHPDCEVNDCKFKPDRGVESDLICSFHLEAEEDSYWALQAPPIQKSSDYNYVVSYGGYTEKSIEWGSVSISIDEVNQTASASPWRGRARKLAILQETAVPPPFPPGGVMDYHLGDREGDQTGTSEKGLLKKPPLPKWDLQRSRSPLD.

Basic residues-rich tracts occupy residues 1-18 (MPTR…RPRR) and 32-42 (QSRRPRRRNKR). Disordered regions lie at residues 1–50 (MPTR…NGSH), 189–218 (LWGD…TPVG), and 445–493 (VPPP…SPLD). Residues 191–493 (GDDAPPSPGP…DLQRSRSPLD (303 aa)) are readthrough domain (RTD). The span at 195 to 215 (PPSPGPDPGPQPPPPPPPSPT) shows a compositional bias: pro residues. The segment covering 484–493 (DLQRSRSPLD) has biased composition (basic and acidic residues).

It belongs to the luteoviruses readthrough protein family.

The protein localises to the virion. In terms of biological role, minor component of the viral capsid involved in aphid transmission. The RTD domain of the protein is exposed on the surface of the particle and determines the vector specificity and tropism of the virus. The RTD domain is not necessary for virus stability in the host hemolymph. In Pea enation mosaic virus-1 (strain WSG) (PEMV-1), this protein is Minor capsid protein P3-RTD.